The sequence spans 91 residues: Sm-like protein LSM6A (91 aa).

Residues threonine 14 to threonine 86 enclose the Sm domain.

The protein belongs to the snRNP Sm proteins family. In terms of assembly, component of the heptameric LSM1-LSM7 complex that forms a seven-membered ring structure with a donut shape. The LSM subunits are arranged in the order LSM1, LSM2, LSM3, LSM6, LSM5, LSM7 and LSM4. Component of the heptameric LSM2-LSM8 complex that forms a seven-membered ring structure with a donut shape. The LSM subunits are arranged in the order LSM8, LSM2, LSM3, LSM6, LSM5, LSM7 and LSM4. LSM6A subunit interacts only with its two neighboring subunits, LSM3A or LSM3B and LSM5. As to expression, expressed in roots, leaves, stems, flowers and siliques.

Its subcellular location is the cytoplasm. The protein localises to the nucleus. Component of LSM protein complexes, which are involved in RNA processing. Component of the cytoplasmic LSM1-LSM7 complex which is involved in mRNA degradation by promoting decapping and leading to accurate 5'-3' mRNA decay. The cytoplasmic LSM1-LSM7 complex regulates developmental gene expression by the decapping of specific development-related transcripts. Component of the nuclear LSM2-LSM8 complex which is involved splicing nuclear mRNAs. LSM2-LSM8 binds directly to the U6 small nuclear RNAs (snRNAs) and is essential for accurate splicing of selected development-related mRNAs through the stabilization of the spliceosomal U6 snRNA. Plays a critical role in the regulation of development-related gene expression. This is Sm-like protein LSM6A from Arabidopsis thaliana (Mouse-ear cress).